Consider the following 444-residue polypeptide: Homocysteine/cysteine synthase (444 aa).

N6-(pyridoxal phosphate)lysine is present on Lys208.

It belongs to the trans-sulfuration enzymes family. Homotetramer. Requires pyridoxal 5'-phosphate as cofactor.

It localises to the cytoplasm. It catalyses the reaction O-acetyl-L-homoserine + methanethiol = L-methionine + acetate + H(+). The catalysed reaction is O-acetyl-L-homoserine + hydrogen sulfide = L-homocysteine + acetate. It carries out the reaction O-acetyl-L-serine + hydrogen sulfide = L-cysteine + acetate. Its pathway is amino-acid biosynthesis; L-methionine biosynthesis via de novo pathway; L-homocysteine from O-acetyl-L-homoserine. It participates in amino-acid biosynthesis; L-cysteine biosynthesis; L-cysteine from L-serine: step 2/2. Catalyzes the conversion of O-acetyl-L-homoserine (OAH) into homocysteine in the methionine biosynthesis pathway. Also catalyzes the conversion of O-acetylserine (OAS) into cysteine, the last step in the cysteine biosynthesis pathway. The chain is Homocysteine/cysteine synthase (MET17) from Kluyveromyces lactis (strain ATCC 8585 / CBS 2359 / DSM 70799 / NBRC 1267 / NRRL Y-1140 / WM37) (Yeast).